We begin with the raw amino-acid sequence, 169 residues long: Shikimate kinase (169 aa).

Residue 13 to 18 (GAGKST) participates in ATP binding. Ser17 serves as a coordination point for Mg(2+). Positions 35, 59, and 80 each coordinate substrate. Arg117 serves as a coordination point for ATP. A substrate-binding site is contributed by Arg136. Position 153 (Arg153) interacts with ATP.

This sequence belongs to the shikimate kinase family. As to quaternary structure, monomer. The cofactor is Mg(2+).

It localises to the cytoplasm. It carries out the reaction shikimate + ATP = 3-phosphoshikimate + ADP + H(+). It participates in metabolic intermediate biosynthesis; chorismate biosynthesis; chorismate from D-erythrose 4-phosphate and phosphoenolpyruvate: step 5/7. Its function is as follows. Catalyzes the specific phosphorylation of the 3-hydroxyl group of shikimic acid using ATP as a cosubstrate. This chain is Shikimate kinase, found in Corynebacterium glutamicum (strain ATCC 13032 / DSM 20300 / JCM 1318 / BCRC 11384 / CCUG 27702 / LMG 3730 / NBRC 12168 / NCIMB 10025 / NRRL B-2784 / 534).